A 114-amino-acid polypeptide reads, in one-letter code: Large ribosomal subunit protein uL18 (114 aa).

This sequence belongs to the universal ribosomal protein uL18 family. Part of the 50S ribosomal subunit; part of the 5S rRNA/L5/L18/L25 subcomplex. Contacts the 5S and 23S rRNAs.

In terms of biological role, this is one of the proteins that bind and probably mediate the attachment of the 5S RNA into the large ribosomal subunit, where it forms part of the central protuberance. The protein is Large ribosomal subunit protein uL18 of Aster yellows phytoplasma.